A 122-amino-acid polypeptide reads, in one-letter code: Large ribosomal subunit protein uL14 (122 aa).

This sequence belongs to the universal ribosomal protein uL14 family. As to quaternary structure, part of the 50S ribosomal subunit. Forms a cluster with proteins L3 and L19. In the 70S ribosome, L14 and L19 interact and together make contacts with the 16S rRNA in bridges B5 and B8.

Its function is as follows. Binds to 23S rRNA. Forms part of two intersubunit bridges in the 70S ribosome. The polypeptide is Large ribosomal subunit protein uL14 (Desulfosudis oleivorans (strain DSM 6200 / JCM 39069 / Hxd3) (Desulfococcus oleovorans)).